A 225-amino-acid polypeptide reads, in one-letter code: UPF0173 metal-dependent hydrolase PH1671 (225 aa).

This sequence belongs to the UPF0173 family.

This is UPF0173 metal-dependent hydrolase PH1671 from Pyrococcus horikoshii (strain ATCC 700860 / DSM 12428 / JCM 9974 / NBRC 100139 / OT-3).